Reading from the N-terminus, the 313-residue chain is tRNA dimethylallyltransferase (313 aa).

Residue 11-18 (GPTAGGKT) coordinates ATP. Position 13 to 18 (13 to 18 (TAGGKT)) interacts with substrate. Interaction with substrate tRNA stretches follow at residues 36–39 (DSAL), 160–164 (QRIGR), and 243–248 (RCVGYR).

It belongs to the IPP transferase family. As to quaternary structure, monomer. It depends on Mg(2+) as a cofactor.

The catalysed reaction is adenosine(37) in tRNA + dimethylallyl diphosphate = N(6)-dimethylallyladenosine(37) in tRNA + diphosphate. Functionally, catalyzes the transfer of a dimethylallyl group onto the adenine at position 37 in tRNAs that read codons beginning with uridine, leading to the formation of N6-(dimethylallyl)adenosine (i(6)A). This chain is tRNA dimethylallyltransferase, found in Neisseria meningitidis serogroup A / serotype 4A (strain DSM 15465 / Z2491).